A 279-amino-acid polypeptide reads, in one-letter code: S-formylglutathione hydrolase (279 aa).

Residues S150, D226, and H258 each act as charge relay system in the active site.

Belongs to the esterase D family.

It catalyses the reaction S-formylglutathione + H2O = formate + glutathione + H(+). Serine hydrolase involved in the detoxification of formaldehyde. Hydrolyzes S-formylglutathione to glutathione and formate. The protein is S-formylglutathione hydrolase (fghA) of Paracoccus denitrificans (strain Pd 1222).